The following is a 1072-amino-acid chain: MPKRLDINTILVIGSGPIVIGQAAEFDYSGTQACQSLKEEGYKVILVNSNPATIMTDTATADKVYIEPLTLEFVSRIIRKERPDAILPTLGGQTGLNMAVELAKSGVLEECGVEILGTKLSAIEQAEDRDLFRTLMQDLNEPTPPSEIIHNLDEAYGFVNEIGYPVIVRPAFTLGGTGGGICHNEEELIEIVTSGLKHSPVTQCLLEKSIAGCKEIEYEVMRDSNDNAIVVCNMENIDPVGVHTGDSIVVAPSQTLSDREYQMLRNTSLRIIRALGIEGGCNVQLALDPYSFQYYVIEVNPRVSRSSALASKATGYPIAKLAAKIAVGLTLDEIVNPVTQKTYACFEPALDYVVSKIPRWPFDKFESANRTLGTQMKATGEVMSIGRNLEESLLKAVRSLELGIYHLELDHLKELDKETMKKRIIKADDERLFIVAEAIRQGVTKEEINEWCEMDFFFLQKVENIVNMEREVKANVGNMEVLQTAKEMGFSDHYIAAAWNKTEREIYDMRKENNMTPVFKMVDTCAAEFESATPYYYSTYADENESIVTDRKSVVVLGSGPIRIGQGVEFDYATVHSVWAIKEAGYEAIIINNNPETVSTDFSISDKLYFEPLTIEDVMHIIDLEKPEGVIVQFGGQTAINLAAKLEEHGVKILGTSLEDLDRAEDRDKFEAALTKLGIPQPVGKTATTVEQAVAIAEEIGYPVLVRPSYVLGGRAMEIVYRQEELLHYMKNAVKVHADHPVLIDRYMVGKEIEVDAISDGENVFIPGIMEHIERAGVHSGDSIGVYPPQSLSEKLKEQIIEHTIALGKGLNIVGLLNIQFVVFKDQVYVIEVNPRASRTVPFLSKITGVPMANVATKVILGQNLVEQGYGTGYHPEEKEVYVKAPVFSFAKLRSVDTTLGPEMKSTGEVMGKDLTLEKALYKGLVASGINIPTHGSVIITVADKDKEEAMEIAKRFHEIGYNLLATAGTAQSLAEQNIPVQVVNKIDSEEYNLLDIIRQGKAQFVINTLTKGKQPARDGFRIRRESVENGVACLTSLDTTRAILRVLESMTFSAHSMKEITQTKRHEVVHA.

A carboxyphosphate synthetic domain region spans residues 1–401 (MPKRLDINTI…SLLKAVRSLE (401 aa)). Residues Arg129, Arg169, Gly175, Gly176, Lys208, Ile210, Glu215, Gly241, Val242, His243, Gln284, and Glu298 each contribute to the ATP site. Residues 133-327 (RTLMQDLNEP…IAKLAAKIAV (195 aa)) form the ATP-grasp 1 domain. Positions 284, 298, and 300 each coordinate Mg(2+). Residues Gln284, Glu298, and Asn300 each contribute to the Mn(2+) site. The interval 402-546 (LGIYHLELDH…YSTYADENES (145 aa)) is oligomerization domain. A carbamoyl phosphate synthetic domain region spans residues 547–929 (IVTDRKSVVV…ALYKGLVASG (383 aa)). Residues 671–861 (EAALTKLGIP…MANVATKVIL (191 aa)) enclose the ATP-grasp 2 domain. ATP is bound by residues Arg707, Arg746, Glu752, Gly777, Val778, His779, Ser780, Gln820, and Glu832. Mg(2+)-binding residues include Gln820, Glu832, and Asn834. Mn(2+) is bound by residues Gln820, Glu832, and Asn834. The MGS-like domain occupies 930 to 1072 (INIPTHGSVI…QTKRHEVVHA (143 aa)). Residues 930–1072 (INIPTHGSVI…QTKRHEVVHA (143 aa)) are allosteric domain.

The protein belongs to the CarB family. Composed of two chains; the small (or glutamine) chain promotes the hydrolysis of glutamine to ammonia, which is used by the large (or ammonia) chain to synthesize carbamoyl phosphate. Tetramer of heterodimers (alpha,beta)4. Mg(2+) is required as a cofactor. The cofactor is Mn(2+).

The enzyme catalyses hydrogencarbonate + L-glutamine + 2 ATP + H2O = carbamoyl phosphate + L-glutamate + 2 ADP + phosphate + 2 H(+). It carries out the reaction hydrogencarbonate + NH4(+) + 2 ATP = carbamoyl phosphate + 2 ADP + phosphate + 2 H(+). It functions in the pathway amino-acid biosynthesis; L-arginine biosynthesis; carbamoyl phosphate from bicarbonate: step 1/1. Its pathway is pyrimidine metabolism; UMP biosynthesis via de novo pathway; (S)-dihydroorotate from bicarbonate: step 1/3. Functionally, large subunit of the glutamine-dependent carbamoyl phosphate synthetase (CPSase). CPSase catalyzes the formation of carbamoyl phosphate from the ammonia moiety of glutamine, carbonate, and phosphate donated by ATP, constituting the first step of 2 biosynthetic pathways, one leading to arginine and/or urea and the other to pyrimidine nucleotides. The large subunit (synthetase) binds the substrates ammonia (free or transferred from glutamine from the small subunit), hydrogencarbonate and ATP and carries out an ATP-coupled ligase reaction, activating hydrogencarbonate by forming carboxy phosphate which reacts with ammonia to form carbamoyl phosphate. This chain is Carbamoyl phosphate synthase large chain, found in Bacillus cereus (strain AH187).